The following is a 325-amino-acid chain: Acetyl-coenzyme A carboxylase carboxyl transferase subunit alpha (325 aa).

A CoA carboxyltransferase C-terminal domain is found at 44–298 (QLEARADQLR…KAAIQDNLQA (255 aa)).

Belongs to the AccA family. In terms of assembly, acetyl-CoA carboxylase is a heterohexamer composed of biotin carboxyl carrier protein (AccB), biotin carboxylase (AccC) and two subunits each of ACCase subunit alpha (AccA) and ACCase subunit beta (AccD).

It is found in the cytoplasm. The catalysed reaction is N(6)-carboxybiotinyl-L-lysyl-[protein] + acetyl-CoA = N(6)-biotinyl-L-lysyl-[protein] + malonyl-CoA. It functions in the pathway lipid metabolism; malonyl-CoA biosynthesis; malonyl-CoA from acetyl-CoA: step 1/1. In terms of biological role, component of the acetyl coenzyme A carboxylase (ACC) complex. First, biotin carboxylase catalyzes the carboxylation of biotin on its carrier protein (BCCP) and then the CO(2) group is transferred by the carboxyltransferase to acetyl-CoA to form malonyl-CoA. In Picosynechococcus sp. (strain ATCC 27264 / PCC 7002 / PR-6) (Agmenellum quadruplicatum), this protein is Acetyl-coenzyme A carboxylase carboxyl transferase subunit alpha.